We begin with the raw amino-acid sequence, 287 residues long: mRNA-capping enzyme regulatory subunit (287 aa).

This sequence belongs to the chordopoxvirinae mRNA-capping enzyme regulatory subunit family. Heterodimer of a catalytic and a regulatory subunit. Intrinsic methyltransferase activity of the catalytic subunit is weak and needs to be stimulated 30- to 50-fold by the regulatory subunit, which is itself catalytically inert.

The protein resides in the virion. Regulatory subunit of the mRNA cap enzyme which stabilizes the catalytic subunit and enhances its methyltransferase activity through an allosteric mechanism. Heterodimeric mRNA capping enzyme catalyzes the linkage of a N7-methyl-guanosine moiety to the first transcribed nucleotide (cap 0 structure), whereas the polymerase associated VP39 is responsible for a second methylation at the 2'-O position of the ribose (cap 1 structure). Functionally, the heterodimeric enzyme is also involved in early viral gene transcription termination and intermediate viral gene transcription initiation. Early gene transcription termination requires the termination factor VTF, the DNA-dependent ATPase NPH-I and the Rap94 subunit of the viral RNA polymerase, as well as the presence of a specific termination motif. Binds, together with RAP94, to the termination motif 5'-UUUUUNU-3' in the nascent early mRNA. The protein is mRNA-capping enzyme regulatory subunit of Vaccinia virus (strain Ankara) (VACV).